The sequence spans 285 residues: Putative ankyrin repeat protein R551 (285 aa).

ANK repeat units lie at residues 99-129, 157-186, 188-214, and 215-249; these read DLKSGILNSVKYHQSKLINILLDKNIDPIKI, NDFDFVYPLAAHGELDIIKLVMHYYQLQDE, IGKICVQAIMNGRVNIVEHFLTSEAFR, and SAPDLMYGFFIRGIEHGGHINITKYFIDKGLCIQQ.

The chain is Putative ankyrin repeat protein R551 from Acanthamoeba polyphaga (Amoeba).